The following is a 388-amino-acid chain: DNA replication and repair protein RecF (388 aa).

An ATP-binding site is contributed by 30–37; it reads GNNAQGKS.

Belongs to the RecF family.

The protein localises to the cytoplasm. Functionally, the RecF protein is involved in DNA metabolism; it is required for DNA replication and normal SOS inducibility. RecF binds preferentially to single-stranded, linear DNA. It also seems to bind ATP. This is DNA replication and repair protein RecF from Picosynechococcus sp. (strain ATCC 27264 / PCC 7002 / PR-6) (Agmenellum quadruplicatum).